We begin with the raw amino-acid sequence, 240 residues long: uncharacterized protein (240 aa).

The first 30 residues, 1-30 (MNKSGMSLIITMLLLIGTAIVIGAAYYAWS), serve as a signal peptide directing secretion.

This is an uncharacterized protein from Methanocaldococcus jannaschii (strain ATCC 43067 / DSM 2661 / JAL-1 / JCM 10045 / NBRC 100440) (Methanococcus jannaschii).